The primary structure comprises 382 residues: Lipid-A-disaccharide synthase (382 aa).

The protein belongs to the LpxB family.

The catalysed reaction is 2-N,3-O-bis[(3R)-3-hydroxytetradecanoyl]-alpha-D-glucosaminyl 1-phosphate + UDP-2-N,3-O-bis[(3R)-3-hydroxytetradecanoyl]-alpha-D-glucosamine = lipid A disaccharide (E. coli) + UDP + H(+). The enzyme catalyses a lipid X + a UDP-2-N,3-O-bis[(3R)-3-hydroxyacyl]-alpha-D-glucosamine = a lipid A disaccharide + UDP + H(+). It functions in the pathway glycolipid biosynthesis; lipid IV(A) biosynthesis; lipid IV(A) from (3R)-3-hydroxytetradecanoyl-[acyl-carrier-protein] and UDP-N-acetyl-alpha-D-glucosamine: step 5/6. Its function is as follows. Condensation of UDP-2,3-diacylglucosamine and 2,3-diacylglucosamine-1-phosphate to form lipid A disaccharide, a precursor of lipid A, a phosphorylated glycolipid that anchors the lipopolysaccharide to the outer membrane of the cell. This is Lipid-A-disaccharide synthase from Escherichia coli (strain ATCC 8739 / DSM 1576 / NBRC 3972 / NCIMB 8545 / WDCM 00012 / Crooks).